Reading from the N-terminus, the 139-residue chain is Cuticle protein 76 (139 aa).

6 tandem repeats follow at residues 7 to 10 (AAPA), 68 to 71 (AAPA), 75 to 78 (AAPV), 93 to 95 (AAP), 105 to 108 (AAPA), and 121 to 124 (AAPA).

Its function is as follows. Component of the cuticle of migratory locust which contains more than 100 different structural proteins. The protein is Cuticle protein 76 of Locusta migratoria (Migratory locust).